The chain runs to 345 residues: S-adenosylmethionine:tRNA ribosyltransferase-isomerase (345 aa).

Belongs to the QueA family. Monomer.

It is found in the cytoplasm. The catalysed reaction is 7-aminomethyl-7-carbaguanosine(34) in tRNA + S-adenosyl-L-methionine = epoxyqueuosine(34) in tRNA + adenine + L-methionine + 2 H(+). The protein operates within tRNA modification; tRNA-queuosine biosynthesis. Its function is as follows. Transfers and isomerizes the ribose moiety from AdoMet to the 7-aminomethyl group of 7-deazaguanine (preQ1-tRNA) to give epoxyqueuosine (oQ-tRNA). The chain is S-adenosylmethionine:tRNA ribosyltransferase-isomerase from Shewanella sp. (strain W3-18-1).